A 457-amino-acid chain; its full sequence is MYLEDTIAAIGTPVGEGGIGIIRVSGPDVPAIARRIVRRVNENGDFVSHRFYYGTVVDPESRDTVDEVMAVLMRAPRSFTREDVLEIQCHGGYLVTRRVLDAVLQCGARPAEPGEFTRRAFLNGRIDLVQAEAVIDVIRSKTEAALNLAQHQREGRLSERLKAVQGCLRHSLALVEAFIDFPDDEVDPASRVEIEAKAREASGRIEELLEGFDEGRVLRDGVSVLIAGKPNVGKSSLLNTLLQEKRAIVTSVPGTTRDIIEEVVNVRGLPLRMLDTAGIRETEDVVEQEGVRLTLEKIPQADLILFVLDGSRPFDDDDRMILAALAERRVIVVTNKSDLPVTLRIPGELEGVHTVAISTATGAGIDDLREAVFETFIHGRAIDSREYVALSQTRHRDALVKARGRIAVFFANLAAGNDLEILAVDLRDALDAVGEVTGETTPDDILELIFQRFCIGK.

The (6S)-5-formyl-5,6,7,8-tetrahydrofolate site is built by R23, E86, and R125. One can recognise a TrmE-type G domain in the interval 221–377 (GVSVLIAGKP…LREAVFETFI (157 aa)). N231 serves as a coordination point for K(+). Residues 231–236 (NVGKSS), 250–256 (TSVPGTT), and 275–278 (DTAG) each bind GTP. S235 is a binding site for Mg(2+). Positions 250, 252, and 255 each coordinate K(+). Residue T256 coordinates Mg(2+). K457 contacts (6S)-5-formyl-5,6,7,8-tetrahydrofolate.

Belongs to the TRAFAC class TrmE-Era-EngA-EngB-Septin-like GTPase superfamily. TrmE GTPase family. As to quaternary structure, homodimer. Heterotetramer of two MnmE and two MnmG subunits. The cofactor is K(+).

It localises to the cytoplasm. Its function is as follows. Exhibits a very high intrinsic GTPase hydrolysis rate. Involved in the addition of a carboxymethylaminomethyl (cmnm) group at the wobble position (U34) of certain tRNAs, forming tRNA-cmnm(5)s(2)U34. The protein is tRNA modification GTPase MnmE of Geobacter metallireducens (strain ATCC 53774 / DSM 7210 / GS-15).